Consider the following 251-residue polypeptide: Phosphate import ATP-binding protein PstB (251 aa).

The ABC transporter domain occupies 5–246; sequence IKIRGVNFFY…PKDKRTEDYI (242 aa). 37 to 44 contributes to the ATP binding site; the sequence is GPSGCGKS.

Belongs to the ABC transporter superfamily. Phosphate importer (TC 3.A.1.7) family. The complex is composed of two ATP-binding proteins (PstB), two transmembrane proteins (PstC and PstA) and a solute-binding protein (PstS).

It localises to the cell membrane. The catalysed reaction is phosphate(out) + ATP + H2O = ADP + 2 phosphate(in) + H(+). In terms of biological role, part of the ABC transporter complex PstSACB involved in phosphate import. Responsible for energy coupling to the transport system. This chain is Phosphate import ATP-binding protein PstB, found in Dehalococcoides mccartyi (strain ATCC BAA-2266 / KCTC 15142 / 195) (Dehalococcoides ethenogenes (strain 195)).